We begin with the raw amino-acid sequence, 192 residues long: tRNA (pseudouridine(54)-N(1))-methyltransferase (192 aa).

The S-adenosyl-L-methionine site is built by Leu127 and Cys181.

It belongs to the methyltransferase superfamily. TrmY family. Homodimer.

The protein resides in the cytoplasm. It catalyses the reaction pseudouridine(54) in tRNA + S-adenosyl-L-methionine = N(1)-methylpseudouridine(54) in tRNA + S-adenosyl-L-homocysteine + H(+). Its function is as follows. Specifically catalyzes the N1-methylation of pseudouridine at position 54 (Psi54) in tRNAs. The polypeptide is tRNA (pseudouridine(54)-N(1))-methyltransferase (Methanocella arvoryzae (strain DSM 22066 / NBRC 105507 / MRE50)).